Reading from the N-terminus, the 431-residue chain is D-tagatose-1,6-bisphosphate aldolase subunit KbaZ (431 aa).

Belongs to the GatZ/KbaZ family. KbaZ subfamily. As to quaternary structure, forms a complex with KbaY.

It participates in carbohydrate metabolism; D-tagatose 6-phosphate degradation; D-glyceraldehyde 3-phosphate and glycerone phosphate from D-tagatose 6-phosphate: step 2/2. Functionally, component of the tagatose-1,6-bisphosphate aldolase KbaYZ that is required for full activity and stability of the Y subunit. Could have a chaperone-like function for the proper and stable folding of KbaY. When expressed alone, KbaZ does not show any aldolase activity. This is D-tagatose-1,6-bisphosphate aldolase subunit KbaZ from Salmonella arizonae (strain ATCC BAA-731 / CDC346-86 / RSK2980).